Reading from the N-terminus, the 427-residue chain is 3-phosphoshikimate 1-carboxyvinyltransferase (427 aa).

Residues lysine 22, serine 23, and arginine 27 each contribute to the 3-phosphoshikimate site. Lysine 22 serves as a coordination point for phosphoenolpyruvate. Residues glycine 96 and arginine 124 each coordinate phosphoenolpyruvate. 3-phosphoshikimate contacts are provided by serine 169, serine 170, glutamine 171, serine 197, aspartate 313, asparagine 336, and lysine 340. Glutamine 171 contacts phosphoenolpyruvate. Aspartate 313 functions as the Proton acceptor in the catalytic mechanism. Residues arginine 344, arginine 386, and lysine 411 each coordinate phosphoenolpyruvate.

Belongs to the EPSP synthase family. In terms of assembly, monomer.

It is found in the cytoplasm. The enzyme catalyses 3-phosphoshikimate + phosphoenolpyruvate = 5-O-(1-carboxyvinyl)-3-phosphoshikimate + phosphate. It functions in the pathway metabolic intermediate biosynthesis; chorismate biosynthesis; chorismate from D-erythrose 4-phosphate and phosphoenolpyruvate: step 6/7. Functionally, catalyzes the transfer of the enolpyruvyl moiety of phosphoenolpyruvate (PEP) to the 5-hydroxyl of shikimate-3-phosphate (S3P) to produce enolpyruvyl shikimate-3-phosphate and inorganic phosphate. This is 3-phosphoshikimate 1-carboxyvinyltransferase from Shigella dysenteriae.